A 1069-amino-acid polypeptide reads, in one-letter code: MSQGRRTNELGWHERMSETAEHGTGAANATASPSGAVPPSGATATAGTGDEPGFRYDARLAADIERRWQRRWADEGTFNSPNPVGPLAAGFDEVAGREPFYIMDMFPYPSGTGLHVGHPLGYIGTDVFARYLRMSGRHVLHPFGYDAFGLPAEQYAINTGQHPRTTTDANIANMRRQLSRLGLGHDTRREIATTDVGYYRWTQWIFEQIFDAWYDPQAGRARPIAELIAEFEAGTRSPAAGPAAGTTAVSVDAVRAANPTGLPWAELDRVTRRRVVDAHRLAYISEQLVNWCPGLGTVLANEEVTAEGRSDIGNYPVFRRPLRQWVLRITAYAERLVDDLDLVDWSDSIKQMQRNWIGPSDGAGVEFAVVPPSGSAGAAPGQRIEVYTTRPDTLAGATFLVLAPEHPQVDALVADAWPAGTPGAWRFPAGRGPAVGEAAEVAAEEVAAEEVGAAEVEAAAADPAWTPRAAVEAYRAFAARRSDRQRGEEVDRTGVFTGAYVRNPVGGGLLPVFLADYVLVGYGTGAIMAVPAHDSRDFSFARAFDLPIPAVLAPDEQWYAEHRVTPGAPPSAWPEAFGGEGAYLPGPAGTPVLAGLTKPDAIKTTVRWLEDGGHGRLARSYRLRDWLFSRQRYWGEPFPIVFDDDGLPYAVPDELLPVELPEMTDFRPTAMAEDDESDPVPPLARVADWASVTLDLGDGPKRYRRETNTMPQWAGSCWYHLRYLDPTNTERFVDETVERYWLAKPGAAAGDGGVDLYVGGVEHAVLHLLYARFWQKVLYDLGHVSSKEPFKRLFNQGYIQADAFTDARGMYVPAAEVKQTDDGRFTHHGAPVDRRSGKMGKSLKNSVSPDEMYERFGADTLRVYEMAMGPLDADRPWHTDDIVGSHRFLQRLWRAVVDEGSGTVAVSDEQLDAEATRVLHRTIITLAAEYAGLRFNTAVARLIELTNYVSKRYGQAATPRALAEPLVLMVAPLAPHIAEELWTRLGHSESVSRAAFPVGDPALAAESERTIPVQVNGKVRFTLQVPDGAAEPVIRELLTAHPDYARQTEGRTIKKTIIVPGRIVNIALG.

Positions 19-53 are disordered; sequence TAEHGTGAANATASPSGAVPPSGATATAGTGDEPG. The short motif at 107–118 is the 'HIGH' region element; sequence PYPSGTGLHVGH. A compositionally biased stretch (basic and acidic residues) spans 823–836; sequence GRFTHHGAPVDRRS. Residues 823–846 form a disordered region; that stretch reads GRFTHHGAPVDRRSGKMGKSLKNS. The 'KMSKS' region signature appears at 838 to 842; that stretch reads KMGKS. Lysine 841 serves as a coordination point for ATP.

It belongs to the class-I aminoacyl-tRNA synthetase family.

It localises to the cytoplasm. The enzyme catalyses tRNA(Leu) + L-leucine + ATP = L-leucyl-tRNA(Leu) + AMP + diphosphate. In Frankia alni (strain DSM 45986 / CECT 9034 / ACN14a), this protein is Leucine--tRNA ligase.